The following is a 412-amino-acid chain: Probable histone-binding protein rba-1 (412 aa).

6 WD repeats span residues 117–157 (NHPG…SEPK), 169–209 (GHEG…TISG), 219–259 (GHSS…PQLT), 262–302 (GHTA…KKMY), 306–346 (HHND…DPSS), and 365–405 (GHTG…VSSE).

It belongs to the WD repeat RBAP46/RBAP48/MSI1 family. As to quaternary structure, binds directly to helix 1 of the histone fold of histone H4, a region that is not accessible when H4 is in chromatin. Interacts with zft-11; the interaction is required to suppress the activation of non-neuronal genes in neurons.

It is found in the nucleus. Its function is as follows. Core histone-binding subunit that may target chromatin assembly factors, chromatin remodeling factors and histone deacetylases to their histone substrates in a manner that is regulated by nucleosomal DNA. Plays a role in regulating cell cycle progression. Required to repress the induction of vulval development by Ras signaling. In association with the zinc finger protein ztf-11, negatively regulates the expression of non-neuronal genes during neurogenesis. This chain is Probable histone-binding protein rba-1, found in Caenorhabditis elegans.